A 310-amino-acid chain; its full sequence is Ribose-phosphate pyrophosphokinase (310 aa).

ATP contacts are provided by residues 34–36 and 93–94; these read DQE and RQ. Residues H127 and D167 each contribute to the Mg(2+) site. Residue K190 is part of the active site. D-ribose 5-phosphate is bound by residues R192, D216, and 220–224; that span reads DSGGT.

It belongs to the ribose-phosphate pyrophosphokinase family. Class I subfamily. In terms of assembly, homohexamer. Mg(2+) is required as a cofactor.

The protein resides in the cytoplasm. The catalysed reaction is D-ribose 5-phosphate + ATP = 5-phospho-alpha-D-ribose 1-diphosphate + AMP + H(+). It participates in metabolic intermediate biosynthesis; 5-phospho-alpha-D-ribose 1-diphosphate biosynthesis; 5-phospho-alpha-D-ribose 1-diphosphate from D-ribose 5-phosphate (route I): step 1/1. Involved in the biosynthesis of the central metabolite phospho-alpha-D-ribosyl-1-pyrophosphate (PRPP) via the transfer of pyrophosphoryl group from ATP to 1-hydroxyl of ribose-5-phosphate (Rib-5-P). The sequence is that of Ribose-phosphate pyrophosphokinase from Agrobacterium fabrum (strain C58 / ATCC 33970) (Agrobacterium tumefaciens (strain C58)).